An 84-amino-acid polypeptide reads, in one-letter code: Hydramacin-1 (84 aa).

The first 24 residues, 1-24, serve as a signal peptide directing secretion; sequence MRTVVFFILVSIFLVALKPTGTQA. Q25 is subject to Pyrrolidone carboxylic acid. 4 disulfide bridges follow: C29–C72, C36–C65, C51–C81, and C55–C83.

As to expression, expressed in the endodermal epithelium.

It is found in the secreted. The protein localises to the target cell membrane. Cationic antimicrobial peptide potently active against Gram-positive and Gram-negative bacteria including multi-resistant human pathogenic strains. Is not active against the Gram-positive Coccus species, Gram-negative non-fermentation species and against the fungus C.albicans. It leads to aggregation of bacteria as an initial step of its bactericidal mechanism. Aggregated cells are connected via electron-dense contacts and adopt a thorn apple-like morphology. Hydramycin contains a belt of positively charged residues that separate two hydrophobic areas. This structure may explain the observed aggregation of bacteria, since each of these areas can immerse into the outer leaflets of the membranes of two individual bacteria. Is able to permeabilize membranes of viable bacteria at low and neutral pH values, but no pore-forming activity is not detected. This is Hydramacin-1 from Hydra vulgaris (Hydra).